We begin with the raw amino-acid sequence, 361 residues long: MLALRQGALLLSARGGQTTHDNLQLCAGPSRRPRARWISSAPRPSTLVERHIRPQASTASDATTSTSQRILSIHDVDNGQILGFGADLAEDHPGFHDPAYKQRRAWLAEMAKTHRIGTPIPDVEYSPAEVATWDAVLEELSGLLPQHACREYLRCLTLFDFRKGRVPQLEEMNTVLRSTTGWTVRPVAGLMHPRHFLAGLAFKHFHSTQYMRHPSKPSYTPEPDVVHELIGHVPLLADPAYARLIQTIGLASLAADDKQIWHLTKVYWHTVEFGVVREGDQVKAFGAGILSSYGELAHMASGAAALERLDPFRPQPRMAYKDGFQKRYFVLDSFAEGSELLSSYAASLGLPESLRGDASVA.

Residues 1 to 55 constitute a chloroplast transit peptide; sequence MLALRQGALLLSARGGQTTHDNLQLCAGPSRRPRARWISSAPRPSTLVERHIRPQ. The disordered stretch occupies residues 47–67; sequence LVERHIRPQASTASDATTSTS. Positions 56–67 are enriched in low complexity; sequence ASTASDATTSTS. Residues H227, H232, and E272 each contribute to the Fe cation site.

This sequence belongs to the biopterin-dependent aromatic amino acid hydroxylase family. Fe(2+) serves as cofactor.

Its subcellular location is the plastid. It localises to the chloroplast. The catalysed reaction is (6R)-L-erythro-5,6,7,8-tetrahydrobiopterin + L-phenylalanine + O2 = (4aS,6R)-4a-hydroxy-L-erythro-5,6,7,8-tetrahydrobiopterin + L-tyrosine. In terms of biological role, catalyzes the hydroxylation of L-phenylalanine to L-tyrosine. Can functionally complement an Escherichia coli tyrosine auxotroph. The polypeptide is Phenylalanine 4-monooxygenase, chloroplastic (Chlamydomonas reinhardtii (Chlamydomonas smithii)).